A 479-amino-acid chain; its full sequence is Bifunctional protein HldE (479 aa).

The interval 1-319 (MTVILPDFLK…NVVQKYEYTK (319 aa)) is ribokinase. ATP is bound at residue 195 to 198 (NMSE). Asp264 is a catalytic residue. A cytidylyltransferase region spans residues 346–479 (MTNGVFDILH…IDTMEINEIN (134 aa)).

It in the N-terminal section; belongs to the carbohydrate kinase PfkB family. The protein in the C-terminal section; belongs to the cytidylyltransferase family. As to quaternary structure, homodimer.

The catalysed reaction is D-glycero-beta-D-manno-heptose 7-phosphate + ATP = D-glycero-beta-D-manno-heptose 1,7-bisphosphate + ADP + H(+). It carries out the reaction D-glycero-beta-D-manno-heptose 1-phosphate + ATP + H(+) = ADP-D-glycero-beta-D-manno-heptose + diphosphate. It functions in the pathway nucleotide-sugar biosynthesis; ADP-L-glycero-beta-D-manno-heptose biosynthesis; ADP-L-glycero-beta-D-manno-heptose from D-glycero-beta-D-manno-heptose 7-phosphate: step 1/4. It participates in nucleotide-sugar biosynthesis; ADP-L-glycero-beta-D-manno-heptose biosynthesis; ADP-L-glycero-beta-D-manno-heptose from D-glycero-beta-D-manno-heptose 7-phosphate: step 3/4. Functionally, catalyzes the phosphorylation of D-glycero-D-manno-heptose 7-phosphate at the C-1 position to selectively form D-glycero-beta-D-manno-heptose-1,7-bisphosphate. Catalyzes the ADP transfer from ATP to D-glycero-beta-D-manno-heptose 1-phosphate, yielding ADP-D-glycero-beta-D-manno-heptose. The polypeptide is Bifunctional protein HldE (Blochmanniella floridana).